Reading from the N-terminus, the 822-residue chain is LPS-assembly protein LptD (822 aa).

An N-terminal signal peptide occupies residues 1–37 (MRRASRSPFILSPVAHAVSRLVLCATLGWTYAGSGHA). Residues 38 to 97 (QVPAPAGGSEVPLGARPPASAPVAAQQETPLKLKSSPALAEEVPNGPGDEGPTFVFGDSV) form a disordered region.

The protein belongs to the LptD family. As to quaternary structure, component of the lipopolysaccharide transport and assembly complex. Interacts with LptE and LptA.

The protein resides in the cell outer membrane. Functionally, together with LptE, is involved in the assembly of lipopolysaccharide (LPS) at the surface of the outer membrane. This is LPS-assembly protein LptD from Polaromonas sp. (strain JS666 / ATCC BAA-500).